Consider the following 285-residue polypeptide: Nucleotide-binding protein HI_1146 (285 aa).

8 to 15 contacts ATP; it reads GRSGAGKS. 56-59 serves as a coordination point for GTP; it reads DIRN.

It belongs to the RapZ-like family.

Displays ATPase and GTPase activities. The sequence is that of Nucleotide-binding protein HI_1146 from Haemophilus influenzae (strain ATCC 51907 / DSM 11121 / KW20 / Rd).